The following is a 527-amino-acid chain: Homeobox protein NOBOX (527 aa).

4 disordered regions span residues 1-126, 194-245, 271-306, and 488-527; these read MEPT…DLKK, VEKL…DVFP, VTPP…RDVP, and ETGS…GAKE. The homeobox DNA-binding region spans 136–195; it reads RKKTRTLYRSDQLEELERIFQEDHYPDSDKRHEISQMVGVTPQRIMVWFQNRRAKWRKVE. Residues 194-203 are compositionally biased toward basic and acidic residues; sequence VEKLNEKETK. Polar residues predominate over residues 488–506; sequence ETGSSLSKMSDEQTSSSLE. Residues 511–527 are compositionally biased toward basic and acidic residues; sequence EEVRDKNKNSHAAGAKE.

Specifically expressed in ovaries and testes. In ovaries, expressed in oocytes from primordial through antral follicles but not in granulosa cells, theca cells and corpora lutea.

It is found in the nucleus. In terms of biological role, transcription factor which plays an essential role in postnatal follicle development. Binds preferentially to the DNA sequences 5'-TAATTG-3', 5'-TAGTTG-3' and 5'-TAATTA-3'. Directly regulates the transcription of POU5F1 and GDF9 during early folliculogenesis. In Mus musculus (Mouse), this protein is Homeobox protein NOBOX (Nobox).